The following is a 95-amino-acid chain: Small ribosomal subunit protein uS19 (95 aa).

Positions 76-95 are disordered; it reads PTRRFGGHADKKAATKGQVR.

Belongs to the universal ribosomal protein uS19 family.

In terms of biological role, protein S19 forms a complex with S13 that binds strongly to the 16S ribosomal RNA. The polypeptide is Small ribosomal subunit protein uS19 (Pseudothermotoga lettingae (strain ATCC BAA-301 / DSM 14385 / NBRC 107922 / TMO) (Thermotoga lettingae)).